The sequence spans 404 residues: Homocysteine-responsive endoplasmic reticulum-resident ubiquitin-like domain member 2 protein (404 aa).

Residues 10 to 89 form the Ubiquitin-like domain; the sequence is VTLIIKAPNQ…HMVHLVCASR (80 aa). The disordered stretch occupies residues 86-153; the sequence is CASRSPPSSP…TLSQAQTDPA (68 aa). Composition is skewed to low complexity over residues 88–97 and 109–126; these read SRSPPSSPKS and SSTS…PSPS. The span at 127–153 shows a compositional bias: polar residues; the sequence is QESLSLVTGSSEGLRQRTLSQAQTDPA. The chain crosses the membrane as a helical span at residues 301–321; it reads FIMVMGAMLLVYLHQAGWFPF.

It is found in the membrane. Its function is as follows. Could be involved in the unfolded protein response (UPR) pathway. In Mus musculus (Mouse), this protein is Homocysteine-responsive endoplasmic reticulum-resident ubiquitin-like domain member 2 protein (Herpud2).